The following is a 248-amino-acid chain: Metallo-beta-lactamase type 2 (248 aa).

The signal sequence occupies residues 1–21; that stretch reads MKRLKGLLVLALGFTGLQVFG. 5 residues coordinate Zn(2+): H97, H99, D101, H160, and C179. K182 contributes to the substrate binding site. H221 contributes to the Zn(2+) binding site.

This sequence belongs to the metallo-beta-lactamase superfamily. Class-B beta-lactamase family. Monomer. Requires Zn(2+) as cofactor.

Its subcellular location is the periplasm. It catalyses the reaction a beta-lactam + H2O = a substituted beta-amino acid. In terms of biological role, confers resistance to the different beta-lactams antibiotics (penicillin, cephalosporin and carbapenem) via the hydrolysis of the beta-lactam ring. In Elizabethkingia meningoseptica (Chryseobacterium meningosepticum), this protein is Metallo-beta-lactamase type 2 (blaB6).